The following is a 306-amino-acid chain: Pantothenate kinase (306 aa).

Residue 90 to 97 (GSVAVGKS) coordinates ATP.

This sequence belongs to the prokaryotic pantothenate kinase family.

Its subcellular location is the cytoplasm. The enzyme catalyses (R)-pantothenate + ATP = (R)-4'-phosphopantothenate + ADP + H(+). It participates in cofactor biosynthesis; coenzyme A biosynthesis; CoA from (R)-pantothenate: step 1/5. This chain is Pantothenate kinase (coaA), found in Listeria innocua serovar 6a (strain ATCC BAA-680 / CLIP 11262).